Here is a 79-residue protein sequence, read N- to C-terminus: Acyl carrier protein (79 aa).

The Carrier domain maps to 3–78; it reads QEILEKVRSI…DAVSYIQEKK (76 aa). An O-(pantetheine 4'-phosphoryl)serine modification is found at S38.

Belongs to the acyl carrier protein (ACP) family. In terms of processing, 4'-phosphopantetheine is transferred from CoA to a specific serine of apo-ACP by AcpS. This modification is essential for activity because fatty acids are bound in thioester linkage to the sulfhydryl of the prosthetic group.

It is found in the cytoplasm. The protein operates within lipid metabolism; fatty acid biosynthesis. Functionally, carrier of the growing fatty acid chain in fatty acid biosynthesis. This Synechococcus sp. (strain RCC307) protein is Acyl carrier protein.